We begin with the raw amino-acid sequence, 191 residues long: Peptidyl-tRNA hydrolase (191 aa).

Residue Tyr-16 participates in tRNA binding. Catalysis depends on His-21, which acts as the Proton acceptor. Residues Phe-67, Asn-69, and Asn-115 each contribute to the tRNA site.

Belongs to the PTH family. As to quaternary structure, monomer.

The protein resides in the cytoplasm. The catalysed reaction is an N-acyl-L-alpha-aminoacyl-tRNA + H2O = an N-acyl-L-amino acid + a tRNA + H(+). Hydrolyzes ribosome-free peptidyl-tRNAs (with 1 or more amino acids incorporated), which drop off the ribosome during protein synthesis, or as a result of ribosome stalling. Functionally, catalyzes the release of premature peptidyl moieties from peptidyl-tRNA molecules trapped in stalled 50S ribosomal subunits, and thus maintains levels of free tRNAs and 50S ribosomes. This Ruthia magnifica subsp. Calyptogena magnifica protein is Peptidyl-tRNA hydrolase.